The primary structure comprises 191 residues: Penicillin-binding protein activator LpoB (191 aa).

The signal sequence occupies residues 1–16 (MKRYLSLALAALVLTG). Cys-17 carries N-palmitoyl cysteine lipidation. Cys-17 carries S-diacylglycerol cysteine lipidation.

The protein belongs to the LpoB family. Interacts with PBP1b.

The protein localises to the cell outer membrane. In terms of biological role, regulator of peptidoglycan synthesis that is essential for the function of penicillin-binding protein 1B (PBP1b). The protein is Penicillin-binding protein activator LpoB of Yersinia pestis (strain D182038).